We begin with the raw amino-acid sequence, 220 residues long: Thiopurine S-methyltransferase (220 aa).

S-adenosyl-L-methionine is bound by residues Trp-14, Leu-49, Glu-70, and Arg-127.

This sequence belongs to the class I-like SAM-binding methyltransferase superfamily. TPMT family.

It localises to the cytoplasm. It catalyses the reaction S-adenosyl-L-methionine + a thiopurine = S-adenosyl-L-homocysteine + a thiopurine S-methylether.. The protein is Thiopurine S-methyltransferase of Gluconobacter oxydans (strain 621H) (Gluconobacter suboxydans).